A 254-amino-acid chain; its full sequence is Type II restriction enzyme HpaI (254 aa).

The catalysed reaction is Endonucleolytic cleavage of DNA to give specific double-stranded fragments with terminal 5'-phosphates.. Functionally, a P subtype restriction enzyme that recognizes the double-stranded sequence 5'-GTTAAC-3' and cleaves after T-3. This Haemophilus parainfluenzae protein is Type II restriction enzyme HpaI (hpaIR).